A 498-amino-acid chain; its full sequence is ATP synthase subunit beta, chloroplastic (498 aa).

G172–T179 contributes to the ATP binding site.

Belongs to the ATPase alpha/beta chains family. F-type ATPases have 2 components, CF(1) - the catalytic core - and CF(0) - the membrane proton channel. CF(1) has five subunits: alpha(3), beta(3), gamma(1), delta(1), epsilon(1). CF(0) has four main subunits: a(1), b(1), b'(1) and c(9-12).

It is found in the plastid. It localises to the chloroplast thylakoid membrane. It carries out the reaction ATP + H2O + 4 H(+)(in) = ADP + phosphate + 5 H(+)(out). Functionally, produces ATP from ADP in the presence of a proton gradient across the membrane. The catalytic sites are hosted primarily by the beta subunits. This chain is ATP synthase subunit beta, chloroplastic, found in Solanum tuberosum (Potato).